Here is a 197-residue protein sequence, read N- to C-terminus: Imidazoleglycerol-phosphate dehydratase (197 aa).

It belongs to the imidazoleglycerol-phosphate dehydratase family.

Its subcellular location is the cytoplasm. It catalyses the reaction D-erythro-1-(imidazol-4-yl)glycerol 3-phosphate = 3-(imidazol-4-yl)-2-oxopropyl phosphate + H2O. The protein operates within amino-acid biosynthesis; L-histidine biosynthesis; L-histidine from 5-phospho-alpha-D-ribose 1-diphosphate: step 6/9. In Leptospira biflexa serovar Patoc (strain Patoc 1 / Ames), this protein is Imidazoleglycerol-phosphate dehydratase.